The sequence spans 573 residues: Isocitrate dehydrogenase kinase/phosphatase (573 aa).

Residues 317–323 (APGVRGM) and Lys338 each bind ATP. Asp373 is a catalytic residue.

The protein belongs to the AceK family.

Its subcellular location is the cytoplasm. The catalysed reaction is L-seryl-[isocitrate dehydrogenase] + ATP = O-phospho-L-seryl-[isocitrate dehydrogenase] + ADP + H(+). In terms of biological role, bifunctional enzyme which can phosphorylate or dephosphorylate isocitrate dehydrogenase (IDH) on a specific serine residue. This is a regulatory mechanism which enables bacteria to bypass the Krebs cycle via the glyoxylate shunt in response to the source of carbon. When bacteria are grown on glucose, IDH is fully active and unphosphorylated, but when grown on acetate or ethanol, the activity of IDH declines drastically concomitant with its phosphorylation. The chain is Isocitrate dehydrogenase kinase/phosphatase from Pseudomonas fluorescens (strain Pf0-1).